A 340-amino-acid chain; its full sequence is GTPase Obg (340 aa).

One can recognise an Obg domain in the interval 1–159; it reads MGFIDEVKLC…KHVLLKLKVL (159 aa). Residues 160–329 enclose the OBG-type G domain; it reads SDVGIIGMPN…LSEKLKKSNS (170 aa). GTP-binding positions include 166–173, 191–195, 212–215, 279–282, and 310–312; these read GMPNAGKS, FTTVR, DIPG, NKCD, and NGD. Mg(2+) is bound by residues S173 and T193.

Belongs to the TRAFAC class OBG-HflX-like GTPase superfamily. OBG GTPase family. As to quaternary structure, monomer. The cofactor is Mg(2+).

It localises to the cytoplasm. An essential GTPase which binds GTP, GDP and possibly (p)ppGpp with moderate affinity, with high nucleotide exchange rates and a fairly low GTP hydrolysis rate. Plays a role in control of the cell cycle, stress response, ribosome biogenesis and in those bacteria that undergo differentiation, in morphogenesis control. This is GTPase Obg from Wolbachia sp. subsp. Drosophila simulans (strain wRi).